The following is a 148-amino-acid chain: Protein Turandot Z (148 aa).

The N-terminal stretch at 1–23 (MYFAIRLSFVLAVLFCLTGNGSA) is a signal peptide.

The protein belongs to the Turandot family.

Its subcellular location is the secreted. Functionally, a humoral factor that may play a role in stress tolerance. The chain is Protein Turandot Z from Drosophila simulans (Fruit fly).